We begin with the raw amino-acid sequence, 397 residues long: Tryptophan synthase beta chain (397 aa).

An N6-(pyridoxal phosphate)lysine modification is found at Lys87.

Belongs to the TrpB family. In terms of assembly, tetramer of two alpha and two beta chains. Pyridoxal 5'-phosphate is required as a cofactor.

The catalysed reaction is (1S,2R)-1-C-(indol-3-yl)glycerol 3-phosphate + L-serine = D-glyceraldehyde 3-phosphate + L-tryptophan + H2O. The protein operates within amino-acid biosynthesis; L-tryptophan biosynthesis; L-tryptophan from chorismate: step 5/5. The beta subunit is responsible for the synthesis of L-tryptophan from indole and L-serine. The polypeptide is Tryptophan synthase beta chain (Salmonella agona (strain SL483)).